Here is a 194-residue protein sequence, read N- to C-terminus: uncharacterized protein (194 aa).

Residues 1 to 29 form the signal peptide; the sequence is MKKAFLVFLSVVLVTTVFLVKQQESVAQA. Positions 104 to 131 form a coiled coil; the sequence is KVDELLKKAGQIVEEKVEAAKEIAASKD. Residues 149 to 171 traverse the membrane as a helical segment; sequence YFYYVSYVAAAGALILIILAIDI.

It localises to the membrane. This is an uncharacterized protein from Bacillus subtilis (strain 168).